Reading from the N-terminus, the 1091-residue chain is Voltage-dependent calcium channel subunit alpha-2/delta-3 (1091 aa).

An N-terminal signal peptide occupies residues methionine 1–glycine 28. The Extracellular portion of the chain corresponds to aspartate 29–glycine 1068. An N-linked (GlcNAc...) asparagine glycan is attached at asparagine 166. The region spanning aspartate 256–leucine 438 is the VWFA domain. Positions 262, 264, and 266 each coordinate a divalent metal cation. Residues aspartate 262–serine 266 carry the MIDAS-like motif motif. Asparagine 309 carries an N-linked (GlcNAc...) asparagine glycan. Cysteine 412 and cysteine 1055 are joined by a disulfide. Residues tryptophan 452–arginine 549 form the Cache domain. 3 N-linked (GlcNAc...) asparagine glycosylation sites follow: asparagine 553, asparagine 632, and asparagine 793. A Phosphotyrosine modification is found at tyrosine 924. A helical membrane pass occupies residues glycine 1069 to phenylalanine 1089. Topologically, residues serine 1090–arginine 1091 are cytoplasmic.

This sequence belongs to the calcium channel subunit alpha-2/delta family. In terms of assembly, dimer formed of alpha-2-2 and delta-2 chains; disulfide-linked. Voltage-dependent calcium channels are multisubunit complexes, consisting of alpha-1 (CACNA1), alpha-2 (CACNA2D), beta (CACNB) and delta (CACNA2D) subunits in a 1:1:1:1 ratio. Post-translationally, N-glycosylated. In terms of processing, may be proteolytically processed into subunits alpha-2-3 and delta-3 that are disulfide-linked. It is however unclear whether such cleavage really takes place in vivo and has a functional role. In terms of tissue distribution, only detected in brain. Not present in lung, testis, aorta, spleen, jejunum, ventricular muscle and kidney (at protein level). According to PubMed:11687876, it is brain-specific, while according to PubMed:11245980, it is widely expressed.

Its subcellular location is the membrane. Functionally, the alpha-2/delta subunit of voltage-dependent calcium channels regulates calcium current density and activation/inactivation kinetics of the calcium channel. Acts as a regulatory subunit for P/Q-type calcium channel (CACNA1A), N-type (CACNA1B), L-type (CACNA1C OR CACNA1D) but not T-type (CACNA1G). This is Voltage-dependent calcium channel subunit alpha-2/delta-3 (CACNA2D3) from Homo sapiens (Human).